The chain runs to 185 residues: Ribosome-recycling factor (185 aa).

It belongs to the RRF family.

The protein resides in the cytoplasm. Functionally, responsible for the release of ribosomes from messenger RNA at the termination of protein biosynthesis. May increase the efficiency of translation by recycling ribosomes from one round of translation to another. This chain is Ribosome-recycling factor, found in Xylella fastidiosa (strain Temecula1 / ATCC 700964).